The chain runs to 288 residues: Plasmodesmata-located protein 6 (288 aa).

A signal peptide spans 1–22 (MFATKTVLFIAVVSLLGTFSSA). The Extracellular segment spans residues 23 to 256 (AVDTFIYGGC…NNDDDEIEKT (234 aa)). Gnk2-homologous domains are found at residues 25–132 (DTFI…NTTF) and 137–234 (DKTV…ARGG). Disulfide bonds link Cys32/Cys110, Cys84/Cys95, Cys98/Cys123, Cys145/Cys212, Cys188/Cys197, and Cys200/Cys225. Residues 257 to 277 (LAIIVGLIAGVTLLVVFLSFM) traverse the membrane as a helical segment. The interval 257 to 277 (LAIIVGLIAGVTLLVVFLSFM) is necessary and sufficient for plasmodesmal targeting. Residues 278 to 288 (AKSCERGKGGK) lie on the Cytoplasmic side of the membrane.

The protein belongs to the cysteine-rich repeat secretory protein family. Plasmodesmata-located proteins (PDLD) subfamily. As to quaternary structure, (Microbial infection) Interacts with Grapevine fanleaf virus (GFLV) 2B-MP. Highly expressed in inflorescence silique (at mRNA level).

Its subcellular location is the cell membrane. It localises to the cell junction. The protein localises to the plasmodesma. In terms of biological role, modulates cell-to-cell trafficking. The protein is Plasmodesmata-located protein 6 of Arabidopsis thaliana (Mouse-ear cress).